A 399-amino-acid polypeptide reads, in one-letter code: Chorismate synthase (399 aa).

2 residues coordinate NADP(+): R40 and R46. Residues 135–137 (RAS), 256–257 (QA), G301, 316–320 (KPIAT), and R342 each bind FMN.

Belongs to the chorismate synthase family. In terms of assembly, homotetramer. FMNH2 is required as a cofactor.

It catalyses the reaction 5-O-(1-carboxyvinyl)-3-phosphoshikimate = chorismate + phosphate. Its pathway is metabolic intermediate biosynthesis; chorismate biosynthesis; chorismate from D-erythrose 4-phosphate and phosphoenolpyruvate: step 7/7. In terms of biological role, catalyzes the anti-1,4-elimination of the C-3 phosphate and the C-6 proR hydrogen from 5-enolpyruvylshikimate-3-phosphate (EPSP) to yield chorismate, which is the branch point compound that serves as the starting substrate for the three terminal pathways of aromatic amino acid biosynthesis. This reaction introduces a second double bond into the aromatic ring system. The protein is Chorismate synthase of Pseudarthrobacter chlorophenolicus (strain ATCC 700700 / DSM 12829 / CIP 107037 / JCM 12360 / KCTC 9906 / NCIMB 13794 / A6) (Arthrobacter chlorophenolicus).